The chain runs to 490 residues: Auxin transporter-like protein 5 (490 aa).

The Cytoplasmic portion of the chain corresponds to 1–55 (MEMANDKVAETVIVGNYVEMESEGKPPQDIKSKLSNFLWHGGSAYDAWFSCASNQ). A helical membrane pass occupies residues 56–73 (VAQVLLTLPYSFSQLGML). Residues 74–75 (SG) are Extracellular-facing. The chain crosses the membrane as a helical span at residues 76-96 (ILFQLFYGILGSWTAYLISIL). Topologically, residues 97-132 (YVEYRTRKEREKVNFRSHVIQWFEVLDGLLGKHWRN) are cytoplasmic. Residues 133–153 (VGLGFNCTFLLFGSVIQLIAC) traverse the membrane as a helical segment. Residues 154–168 (ASNIYYINDNLDKRT) lie on the Extracellular side of the membrane. A helical membrane pass occupies residues 169-189 (WTYIFGACCATTVFIPSFHNY). R190 is a topological domain (cytoplasmic). Residues 191–211 (IWSFLGLVMTTYTAWYLTIAA) form a helical membrane-spanning segment. The Extracellular segment spans residues 212–227 (VLHGQVEGVKHSGPNK). The helical transmembrane segment at 228–248 (IILYFTGATNILYTFGGHAVT) threads the bilayer. The Cytoplasmic segment spans residues 249–262 (VEIMHAMWKPQKFK). The chain crosses the membrane as a helical span at residues 263 to 283 (AIYLLATLYVLTLTIPSATAV). Topologically, residues 284-310 (YWAFGDMLLNHSNAFALLPKSPFRDMA) are extracellular. N-linked (GlcNAc...) asparagine glycosylation occurs at N293. Residues 311 to 331 (VILMLIHQFITFGFACTPLYF) traverse the membrane as a helical segment. Over 332 to 352 (VWEKTVGMHECKSLCKRALVR) the chain is Cytoplasmic. The helical transmembrane segment at 353–373 (LPVVIPIWFLAIIFPFFGPIN) threads the bilayer. The Extracellular portion of the chain corresponds to 374-376 (STV). The chain crosses the membrane as a helical span at residues 377-397 (GSLLVSFTVYIIPALAHIFTF). Over 398–420 (KSSSARQNAVEQPPKFVGRWVGT) the chain is Cytoplasmic. The helical transmembrane segment at 421-441 (FVINVFIVVWVLIVGFGFGGW) threads the bilayer. Topologically, residues 442 to 490 (ASMVNFVHQIDTFGLFTKCYQCPPPTPSVPTMPPHQMNATAPSPHHHHH) are extracellular. A glycan (N-linked (GlcNAc...) asparagine) is linked at N479.

It belongs to the amino acid/polyamine transporter 2 family. Amino acid/auxin permease (AAAP) (TC 2.A.18.1) subfamily. As to expression, shoots and roots of nodulating plants, at low levels.

The protein resides in the cell membrane. Its function is as follows. Carrier protein involved in proton-driven auxin influx. Mediates the formation of auxin gradient from developing leaves (site of auxin biosynthesis) to tips by contributing to the loading of auxin in vascular tissues and facilitating acropetal (base to tip) auxin transport within inner tissues of the root apex, and basipetal (tip to base) auxin transport within outer tissues of the root apex. May be involved in lateral roots and nodules formation. This chain is Auxin transporter-like protein 5 (LAX5), found in Medicago truncatula (Barrel medic).